A 173-amino-acid polypeptide reads, in one-letter code: Bifunctional protein PyrR (173 aa).

Residues 93 to 105 (VILVDDVLYTGRT) carry the PRPP-binding motif.

It belongs to the purine/pyrimidine phosphoribosyltransferase family. PyrR subfamily. Homodimer and homohexamer; in equilibrium.

The catalysed reaction is UMP + diphosphate = 5-phospho-alpha-D-ribose 1-diphosphate + uracil. Functionally, regulates transcriptional attenuation of the pyrimidine nucleotide (pyr) operon by binding in a uridine-dependent manner to specific sites on pyr mRNA. This disrupts an antiterminator hairpin in the RNA and favors formation of a downstream transcription terminator, leading to a reduced expression of downstream genes. Also displays a weak uracil phosphoribosyltransferase activity which is not physiologically significant. The sequence is that of Bifunctional protein PyrR from Streptococcus thermophilus (strain CNRZ 1066).